The chain runs to 136 residues: uncharacterized protein (136 aa).

A helical membrane pass occupies residues 14–34 (ASVFAFFVLFLFCLKIILVLF).

Its subcellular location is the membrane. This is an uncharacterized protein from Mycoplasma genitalium (strain ATCC 33530 / DSM 19775 / NCTC 10195 / G37) (Mycoplasmoides genitalium).